A 122-amino-acid chain; its full sequence is Large ribosomal subunit protein uL14c (122 aa).

It belongs to the universal ribosomal protein uL14 family. As to quaternary structure, part of the 50S ribosomal subunit.

The protein resides in the plastid. It localises to the chloroplast. Binds to 23S rRNA. This Chlamydomonas reinhardtii (Chlamydomonas smithii) protein is Large ribosomal subunit protein uL14c.